Reading from the N-terminus, the 963-residue chain is Copalyl diphosphate synthase (963 aa).

A type II terpene cyclase (TC) region spans residues 1-539 (MSPMDLQESA…EAYILAALKR (539 aa)). Positions 227 to 292 (ATQWDDECED…FIEKIRSYLH (66 aa)) are substrate binding. Mg(2+) is bound by residues aspartate 311 and aspartate 314. Residues 311-314 (DADD) carry the DXDD motif. Residues 333 to 341 (AMLKEFEEE) carry the NSE/DTE motif. Substrate-binding positions include 337–341 (EFEEE) and 521–522 (VT). The interval 540 to 659 (AADLPDENAE…SVSVHTDHSD (120 aa)) is linker. Polar residues predominate over residues 627-648 (TNGHYVNGTNHETPLTNGISNG). The disordered stretch occupies residues 627-657 (TNGHYVNGTNHETPLTNGISNGDSVSVHTDH). Positions 660–963 (SYYQRSDWTA…KILARMSLEL (304 aa)) are geranylfarnesyl diphosphate synthase (PT). Isopentenyl diphosphate is bound by residues lysine 688, arginine 691, and histidine 720. Residues aspartate 727 and aspartate 731 each coordinate Mg(2+). Residues 727-731 (DDIQD) carry the DDXXD 1 motif. Arginine 736 is a binding site for dimethylallyl diphosphate. Arginine 737 is an isopentenyl diphosphate binding site. Dimethylallyl diphosphate-binding residues include lysine 814, threonine 815, glutamine 848, asparagine 855, lysine 865, and lysine 875. Positions 851–855 (DDYLN) match the DDXXD 2 motif.

It in the N-terminal section; belongs to the terpene synthase family. This sequence in the C-terminal section; belongs to the FPP/GGPP synthase family. As to quaternary structure, homohexamer. Mg(2+) is required as a cofactor.

The catalysed reaction is isopentenyl diphosphate + (2E,6E)-farnesyl diphosphate = (2E,6E,10E)-geranylgeranyl diphosphate + diphosphate. The enzyme catalyses (2E,6E,10E)-geranylgeranyl diphosphate = (+)-copalyl diphosphate. Functionally, bifunctional terpene synthase that possesses both prenyltransferase and type II terpene cyclase activity, converting isopentenyl diphosphate (IPP) and dimethylallyl diphosphate (DMAPP) into geranylgeranyl diphosphate (GGPP) and further converting GGPP into copalyl diphosphate, respectively. This is Copalyl diphosphate synthase from Talaromyces verruculosus (Penicillium verruculosum).